The primary structure comprises 95 residues: Nickel and cobalt resistance protein CnrY (95 aa).

Residues 1–45 (MADVEEWLTHARKVTQEASIGVDVTSIQECISAEPAQRVLVARRD) lie on the Cytoplasmic side of the membrane. Residues 46-68 (AWRAICCAAFAALVAFAAINRVA) form a helical membrane-spanning segment. Residues 69-95 (TIMLEKPAPTWVATPSAASPFGLLIGK) lie on the Periplasmic side of the membrane.

The protein to A.xylosoxydans NccY.

The protein resides in the cell inner membrane. In terms of biological role, nickel and cobalt resistance proteins CnrA, CnrB, CnrC CnrH and CnrR may be involved in the regulation of CNR. Functionally, cnrH alone is able to activate cnr expression, and both CnrY and CrnX are needed for nickel induction of CnrH. In the absence of wild-type CnrY (due either to a frameshift, PubMed:10671463 or absence of the transcript, PubMed:10671464), nickel and cobalt resistance is constitutive, indicating that CrnY may act as a repressor or an anti-sigma factor. In Cupriavidus metallidurans (strain ATCC 43123 / DSM 2839 / NBRC 102507 / CH34) (Ralstonia metallidurans), this protein is Nickel and cobalt resistance protein CnrY (cnrY).